The following is a 233-amino-acid chain: MLKIGTFDLEERPAIVAAISNEPLQQCKTAAEHGADILEIRFDLLGITTSKEAANLLRMLKGTTSLPCIATNRLQSQGGNWEGTEENRIALLEDIMHLTDAVDIELETDEQLRDRIVKKAKEESKTTIISSHDFERTPDKETLKSILDHSHDAGADIAKLAVMPENMQDVLNLLEVTLEVDDVCTISMGKLGKHTRIIAPLYGSKLTYASVSDAVAPGQLKVEDLKKAMEMME.

3-dehydroquinate is bound by residues 39 to 41 and arginine 73; that span reads EIR. Histidine 132 (proton donor/acceptor) is an active-site residue. The active-site Schiff-base intermediate with substrate is the lysine 159. 3-dehydroquinate is bound by residues arginine 196 and glutamine 219.

It belongs to the type-I 3-dehydroquinase family. Homodimer.

It carries out the reaction 3-dehydroquinate = 3-dehydroshikimate + H2O. It participates in metabolic intermediate biosynthesis; chorismate biosynthesis; chorismate from D-erythrose 4-phosphate and phosphoenolpyruvate: step 3/7. In terms of biological role, involved in the third step of the chorismate pathway, which leads to the biosynthesis of aromatic amino acids. Catalyzes the cis-dehydration of 3-dehydroquinate (DHQ) and introduces the first double bond of the aromatic ring to yield 3-dehydroshikimate. In Methanococcoides burtonii (strain DSM 6242 / NBRC 107633 / OCM 468 / ACE-M), this protein is 3-dehydroquinate dehydratase.